The sequence spans 735 residues: MDMFNKVTAFLQQALETREPSINLLESFVDHWKAITNYYIETTDESRAVKNTDIPWRLRQMLDILVYEEKQQGEEAGPCMEYLLQHKILETLCTLGKAQYPPGMSQQVMVFFSKVLSHIQKPVLHLINVYRPVQKLINLCGLPHSQTEKEESQFLFAVCTQVNKDPYVLNYILEIKNDSLKRSSSTSDEAAEKDCSGSSSPERASSPSSSSSACSLLSRSGAHPVSSPQEATGMIPVLLHLEKSEKRRVAHRSLESLLLLVSSTQEDTGHLLAERTPLCDLLAQRLTELYLLIPSTIDPADIHSFSVVQWRTRFTQDSTAESQSFPGSENVYRFFCFLDLCNELIKQAPKVLGVKMARALHSQWLKGVIQPHLLQMSEVGILVHTTLLSCSVRHIHSPALLEELVQFMLGSDTDSETRQHLHTHLLRYRLIEHCNHISDEISITTLRLFEELLQKPNRRILSNLVLRNLENRSYKLPGTGASDERLRVESDLLDESEELEEDPFFPDMYDDSGDSNHEPLLSLPNVRERLNPNLHTQVVDTVNSFLCLVPQEAKTSHLVQGAGYDTYVHDAHKVFKECTALVRDWKWPDSAKATVNNPSTDFYEGHFLHILFDRIARILEQPYELNLQVTSVLSRLAVFPHPNLHEYLLDPYISLSPGARSLFSTLVRVIGDLMQRIQNITNVTDRLVVIRRQLMGLDEESMVDHMTLLKGVIVLEEFCKELAAVAFVKLPTEEQ.

A disordered region spans residues 183–229 (SSSTSDEAAEKDCSGSSSPERASSPSSSSSACSLLSRSGAHPVSSPQ). Positions 196 to 221 (SGSSSPERASSPSSSSSACSLLSRSG) are enriched in low complexity.

It belongs to the FHIP family.

The sequence is that of FHF complex subunit HOOK-interacting protein 2B (fhip2b) from Danio rerio (Zebrafish).